A 381-amino-acid polypeptide reads, in one-letter code: Chaperone protein DnaJ (381 aa).

The region spanning 5-70 is the J domain; sequence DYYEVLGIER…EKRSAYDQFG (66 aa). The CR-type zinc-finger motif lies at 137–215; that stretch reads GTTVDIRVPR…CHGEGRVRET (79 aa). Zn(2+) is bound by residues Cys150, Cys153, Cys167, Cys170, Cys189, Cys192, Cys203, and Cys206. CXXCXGXG motif repeat units follow at residues 150–157, 167–174, 189–196, and 203–210; these read CEHCDGDG, CPTCHGQG, CPTCHGAG, and CRKCHGEG.

This sequence belongs to the DnaJ family. Homodimer. Zn(2+) serves as cofactor.

Its subcellular location is the cytoplasm. In terms of biological role, participates actively in the response to hyperosmotic and heat shock by preventing the aggregation of stress-denatured proteins and by disaggregating proteins, also in an autonomous, DnaK-independent fashion. Unfolded proteins bind initially to DnaJ; upon interaction with the DnaJ-bound protein, DnaK hydrolyzes its bound ATP, resulting in the formation of a stable complex. GrpE releases ADP from DnaK; ATP binding to DnaK triggers the release of the substrate protein, thus completing the reaction cycle. Several rounds of ATP-dependent interactions between DnaJ, DnaK and GrpE are required for fully efficient folding. Also involved, together with DnaK and GrpE, in the DNA replication of plasmids through activation of initiation proteins. The polypeptide is Chaperone protein DnaJ (Chromohalobacter salexigens (strain ATCC BAA-138 / DSM 3043 / CIP 106854 / NCIMB 13768 / 1H11)).